The primary structure comprises 218 residues: Glutathione S-transferase Mu 1 (218 aa).

Residues 2 to 88 (PMILGYWNVR…YLARKHHLCG (87 aa)) form the GST N-terminal domain. Glutathione is bound by residues 7-8 (YW), 43-46 (RSQW), Lys-50, and 59-60 (NL). Residue Ser-67 is modified to Phosphoserine. 72 to 73 (QS) contacts glutathione. Residues 90-208 (TEEERIRADI…KSSRYLSTPI (119 aa)) enclose the GST C-terminal domain. A substrate-binding site is contributed by Tyr-116. Phosphoserine occurs at positions 205 and 210.

It belongs to the GST superfamily. Mu family. Homodimer or heterodimer.

Its subcellular location is the cytoplasm. The catalysed reaction is RX + glutathione = an S-substituted glutathione + a halide anion + H(+). It catalyses the reaction prostaglandin A2 + glutathione = prostaglandin A2-S-(R)-glutathione. The enzyme catalyses prostaglandin J2 + glutathione = prostaglandin J2-S-(R)-glutathione. It carries out the reaction prostaglandin J2 + glutathione = prostaglandin J2-S-(S)-glutathione. The catalysed reaction is prostaglandin A2 + glutathione = prostaglandin A2-S-(S)-glutathione. It catalyses the reaction 11(S)-hydroxy-14(S),15(S)-epoxy-(5Z,8Z,12E)-eicosatrienoate + glutathione = (11S,15S)-dihydroxy-14(R)-S-glutathionyl-(5Z,8Z,12E)-eicosatrienoate. Its function is as follows. Conjugation of reduced glutathione to a wide number of exogenous and endogenous hydrophobic electrophiles. The olfactory GST may be crucial for the acuity of the olfactory process. Participates in the formation of novel hepoxilin regioisomers. The chain is Glutathione S-transferase Mu 1 from Rattus norvegicus (Rat).